A 331-amino-acid chain; its full sequence is MEPIRNLAENLRAVLGRLRDGEPRKGDMFNGQHFWETLGHSIKATSQEATKLSLAFTKPPLPSEEGSQKLCDGLLNAILAAATVYYSLPKEQGITLRKTVREAIADVIEGTIQLVEVILSSRIQSLSQAQLVSTGSVWEACDQWEKLPKDNLAAVQVIVSGYLDVVKDAIEEVEQAQTDGEDPFSDIPEDDEIGARGNQDTYWSEADRRLMAPCLGLMKASKACLKKVIGAIKAHGKADTAEHVAQLDDLVDVTQEVSPSVDELALSMYPPMNHATVRLNAAKLSSVLKKVLAITRSSHVCPEAESTWIQFLDSAVDHNMQKTKNLTQGAL.

Acidic residues predominate over residues 175 to 192; that stretch reads QAQTDGEDPFSDIPEDDE. Positions 175–197 are disordered; the sequence is QAQTDGEDPFSDIPEDDEIGARG.

This sequence belongs to the CCNDBP1 family.

The protein localises to the cytoplasm. The protein resides in the nucleus. Its function is as follows. May negatively regulate cell cycle progression. In Xenopus laevis (African clawed frog), this protein is Cyclin-D1-binding protein 1 homolog (ccndbp1).